The sequence spans 355 residues: MTDHVSLNYKDAGVDIHAGYLLVERIKKAVKQTHRPEVIGGLGGFGALCALPQKYREPILVSGTDGVGTKLRLAIDLKRHETIGIDLVAMCVNDLIVQGAEPLFFLDYFATGQLDVETAACVIAGIAEGCQQAGCALVGGETAEMPGMYQAKDYDLAGFCLGVVEKSKLINGHQNVKSGDTLLALASSGLHSNGYSLVRQVLNLSKKDPETWMLNGKSLADHLLEPTRIYVKSILTLIETQNVDIHAIAHLTGGGFFENIPRVLPKNTCVLIEESSWQWPCIFDWLQKTGNINKQEMYRTFNCGVGMIIALPENQADKTLDFLTSVGEKAWRIGRVDSSKTSSERIIFKKSILNN.

This sequence belongs to the AIR synthase family.

The protein resides in the cytoplasm. The enzyme catalyses 2-formamido-N(1)-(5-O-phospho-beta-D-ribosyl)acetamidine + ATP = 5-amino-1-(5-phospho-beta-D-ribosyl)imidazole + ADP + phosphate + H(+). The protein operates within purine metabolism; IMP biosynthesis via de novo pathway; 5-amino-1-(5-phospho-D-ribosyl)imidazole from N(2)-formyl-N(1)-(5-phospho-D-ribosyl)glycinamide: step 2/2. This is Phosphoribosylformylglycinamidine cyclo-ligase from Hamiltonella defensa subsp. Acyrthosiphon pisum (strain 5AT).